The primary structure comprises 197 residues: Histocompatibility antigen 60c (197 aa).

A signal peptide spans 1–17 (MALLLLILESCSAGTYA). N-linked (GlcNAc...) asparagine glycosylation is found at N51, N81, and N114. S177 is lipidated: GPI-anchor amidated serine. A propeptide spans 178 to 197 (MACKSSPFDGLIMILLIYIL) (removed in mature form).

Belongs to the NKG2D ligand family. In terms of tissue distribution, expressed in skin, and weakly in large intestine.

It is found in the cell membrane. Its function is as follows. Ligand for the KLRK1 immunosurveillance receptor. Binding to KLRK1 stimulates cell lysis in vitro. This chain is Histocompatibility antigen 60c, found in Mus musculus (Mouse).